A 123-amino-acid polypeptide reads, in one-letter code: Large ribosomal subunit protein uL14c (123 aa).

It belongs to the universal ribosomal protein uL14 family. In terms of assembly, part of the 50S ribosomal subunit.

It is found in the plastid. The protein resides in the chloroplast. Functionally, binds to 23S rRNA. This is Large ribosomal subunit protein uL14c from Lolium perenne (Perennial ryegrass).